The following is a 41-amino-acid chain: Large ribosomal subunit protein bL36 (41 aa).

It belongs to the bacterial ribosomal protein bL36 family.

This chain is Large ribosomal subunit protein bL36, found in Orientia tsutsugamushi (strain Boryong) (Rickettsia tsutsugamushi).